A 104-amino-acid chain; its full sequence is MAAKIRREDEIIVLAGKDKGKRAKVSQVLPTGKLIVEGINLVKKHQKPNPQLGVTGGVIEKEAPIQTSNVAIFNQATGKADRVGFRFEDGKKVRFFKSNSELIK.

It belongs to the universal ribosomal protein uL24 family. As to quaternary structure, part of the 50S ribosomal subunit.

Its function is as follows. One of two assembly initiator proteins, it binds directly to the 5'-end of the 23S rRNA, where it nucleates assembly of the 50S subunit. One of the proteins that surrounds the polypeptide exit tunnel on the outside of the subunit. The polypeptide is Large ribosomal subunit protein uL24 (Shewanella denitrificans (strain OS217 / ATCC BAA-1090 / DSM 15013)).